Consider the following 435-residue polypeptide: Cell adhesion molecule 2 (435 aa).

A signal peptide spans 1–24 (MIWKRSAVLRFYSVCGLLLQGSQG). The Extracellular portion of the chain corresponds to 25 to 367 (QFPLTQNVTV…ALAGQNGPDH (343 aa)). The Ig-like V-type domain occupies 27 to 119 (PLTQNVTVVE…PVKTSKAYLT (93 aa)). N-linked (GlcNAc...) asparagine glycans are attached at residues asparagine 31 and asparagine 51. Cystine bridges form between cysteine 44-cysteine 104, cysteine 146-cysteine 203, and cysteine 248-cysteine 296. 2 Ig-like C2-type domains span residues 127-219 (PQIS…VAMQ) and 227-312 (PSVK…YVLI). N-linked (GlcNAc...) asparagine glycosylation occurs at asparagine 291. Residues 368–388 (ALIGGIVAVVVFVTLCSIFLL) traverse the membrane as a helical segment. The Cytoplasmic portion of the chain corresponds to 389–435 (GRYLARHKGTYLTNEAKGAEDAPDADTAIINAEGSQVNAEEKKEYFI). A Phosphoserine modification is found at serine 423.

Belongs to the nectin family.

The protein resides in the cell membrane. It localises to the synapse. Its subcellular location is the cell projection. The protein localises to the axon. Functionally, adhesion molecule that engages in homo- and heterophilic interactions with the other nectin-like family members, leading to cell aggregation. Important for synapse organization, providing regulated trans-synaptic adhesion. Preferentially binds to oligodendrocytes. In terms of biological role, (Microbial infection) Induces cell fusion in neuron infected by a neuropathogenic strain of measles. Interacts with measles hemagglutinin to trigger hyperfusogenic F-mediated membrane fusion and presumably transsynaptic cell-to-cell transmission of the virus. This Homo sapiens (Human) protein is Cell adhesion molecule 2 (CADM2).